Reading from the N-terminus, the 201-residue chain is Cerebellin-4 (201 aa).

The signal sequence occupies residues 1 to 27 (MGSGRRALSAVPAVLLVLTLPGLPVWA). N-linked (GlcNAc...) asparagine glycosylation is found at Asn29 and Asn88. The region spanning 66 to 201 (AANSKVAFSA…TFSGFLVFPL (136 aa)) is the C1q domain.

In terms of assembly, homohexamer; disulfide-linked homotrimers. The trimers are assembled via the globular C1q domains. The trimers associate via N-terminal cysteine residues to form disulfide-linked hexamers. May form oligomers with CBLN1, CBLN2 and CBLN3 prior to secretion. Strongly interacts with DCC in a NTN1-displaceable fashion. Weakly binds to NRXN1 and NRXN2 long and short isoforms produced by alternative promoter usage. Interaction with NRXN3 short isoform is hardly detectable; no interaction at all with NRXN3 long isoform. Post-translationally, sialoglycoprotein.

The protein localises to the secreted. The protein resides in the synapse. Functionally, acts as a synaptic organizer in specific subsets of neurons in the brain. Essential for the formation and maintenance of inhibitory GABAergic synapses. Promotes the development of dendrite-targeting inhibitory GABAergic synapses made by somatostatin-positive interneurons. May contribute to the function of ventral medial habenula region of the brain implicated in the regulation of anxiety-related behaviors. May play a role in CBLN3 export from the endoplasmic reticulum and secretion. In Homo sapiens (Human), this protein is Cerebellin-4 (CBLN4).